The chain runs to 883 residues: Alanine--tRNA ligase (883 aa).

Histidine 563, histidine 567, cysteine 677, and histidine 681 together coordinate Zn(2+).

It belongs to the class-II aminoacyl-tRNA synthetase family. Zn(2+) is required as a cofactor.

The protein localises to the cytoplasm. It catalyses the reaction tRNA(Ala) + L-alanine + ATP = L-alanyl-tRNA(Ala) + AMP + diphosphate. Its function is as follows. Catalyzes the attachment of alanine to tRNA(Ala) in a two-step reaction: alanine is first activated by ATP to form Ala-AMP and then transferred to the acceptor end of tRNA(Ala). Also edits incorrectly charged Ser-tRNA(Ala) and Gly-tRNA(Ala) via its editing domain. The polypeptide is Alanine--tRNA ligase (Cereibacter sphaeroides (strain ATCC 17029 / ATH 2.4.9) (Rhodobacter sphaeroides)).